Here is a 236-residue protein sequence, read N- to C-terminus: Peptidyl-prolyl cis-trans isomerase CYP21-4 (236 aa).

Residues 22–42 traverse the membrane as a helical; Signal-anchor for type II membrane protein segment; that stretch reads ISISTIIVCNLVVAVVILSLV. The segment at 52 to 71 is disordered; that stretch reads SRNTIEHETRSQRFEDTNTA. Over residues 54-67 the composition is skewed to basic and acidic residues; that stretch reads NTIEHETRSQRFED. The PPIase cyclophilin-type domain maps to 82-232; it reads FADINTSKGL…SPIGITGVVL (151 aa). Asn86 carries N-linked (GlcNAc...) asparagine glycosylation.

This sequence belongs to the cyclophilin-type PPIase family. In terms of tissue distribution, ubiquitous.

It localises to the membrane. It catalyses the reaction [protein]-peptidylproline (omega=180) = [protein]-peptidylproline (omega=0). PPIases accelerate the folding of proteins. It catalyzes the cis-trans isomerization of proline imidic peptide bonds in oligopeptides. The protein is Peptidyl-prolyl cis-trans isomerase CYP21-4 (CYP21-4) of Arabidopsis thaliana (Mouse-ear cress).